The chain runs to 613 residues: Dihydroxy-acid dehydratase (613 aa).

D81 contributes to the Mg(2+) binding site. [2Fe-2S] cluster is bound at residue C122. Mg(2+)-binding residues include D123 and K124. N6-carboxylysine is present on K124. C195 is a [2Fe-2S] cluster binding site. E491 contributes to the Mg(2+) binding site. S517 (proton acceptor) is an active-site residue.

This sequence belongs to the IlvD/Edd family. Homodimer. [2Fe-2S] cluster serves as cofactor. The cofactor is Mg(2+).

It carries out the reaction (2R)-2,3-dihydroxy-3-methylbutanoate = 3-methyl-2-oxobutanoate + H2O. The catalysed reaction is (2R,3R)-2,3-dihydroxy-3-methylpentanoate = (S)-3-methyl-2-oxopentanoate + H2O. The protein operates within amino-acid biosynthesis; L-isoleucine biosynthesis; L-isoleucine from 2-oxobutanoate: step 3/4. It functions in the pathway amino-acid biosynthesis; L-valine biosynthesis; L-valine from pyruvate: step 3/4. In terms of biological role, functions in the biosynthesis of branched-chain amino acids. Catalyzes the dehydration of (2R,3R)-2,3-dihydroxy-3-methylpentanoate (2,3-dihydroxy-3-methylvalerate) into 2-oxo-3-methylpentanoate (2-oxo-3-methylvalerate) and of (2R)-2,3-dihydroxy-3-methylbutanoate (2,3-dihydroxyisovalerate) into 2-oxo-3-methylbutanoate (2-oxoisovalerate), the penultimate precursor to L-isoleucine and L-valine, respectively. The sequence is that of Dihydroxy-acid dehydratase from Photobacterium profundum (strain SS9).